The sequence spans 401 residues: Acetate kinase (401 aa).

N7 serves as a coordination point for Mg(2+). K14 serves as a coordination point for ATP. R91 is a substrate binding site. D148 acts as the Proton donor/acceptor in catalysis. ATP contacts are provided by residues 208-212, 283-285, and 331-335; these read HLGNG, DFR, and GVGEN. E384 provides a ligand contact to Mg(2+).

Belongs to the acetokinase family. In terms of assembly, homodimer. The cofactor is Mg(2+). Mn(2+) is required as a cofactor.

It is found in the cytoplasm. It catalyses the reaction acetate + ATP = acetyl phosphate + ADP. It participates in metabolic intermediate biosynthesis; acetyl-CoA biosynthesis; acetyl-CoA from acetate: step 1/2. Its function is as follows. Catalyzes the formation of acetyl phosphate from acetate and ATP. Can also catalyze the reverse reaction. This is Acetate kinase from Helicobacter hepaticus (strain ATCC 51449 / 3B1).